A 248-amino-acid chain; its full sequence is Peptidyl-prolyl cis-trans isomerase, chloroplastic (248 aa).

Positions 85–243 (FFDIEIGGES…KPCKIAKSGE (159 aa)) constitute a PPIase cyclophilin-type domain. Residues 223–248 (QETSKLDNSPKKPCKIAKSGELPLDG) form a disordered region.

This sequence belongs to the cyclophilin-type PPIase family. In terms of tissue distribution, highly expressed in leaf.

The protein resides in the plastid. The protein localises to the chloroplast stroma. The enzyme catalyses [protein]-peptidylproline (omega=180) = [protein]-peptidylproline (omega=0). Binds cyclosporin A (CsA). CsA mediates some of its effects via an inhibitory action on PPIase. Its function is as follows. PPIases accelerate the folding of proteins. It catalyzes the cis-trans isomerization of proline imidic peptide bonds in oligopeptides. The sequence is that of Peptidyl-prolyl cis-trans isomerase, chloroplastic from Vicia faba (Broad bean).